An 867-amino-acid polypeptide reads, in one-letter code: Alanine--tRNA ligase (867 aa).

Zn(2+) contacts are provided by His558, His562, Cys660, and His664.

This sequence belongs to the class-II aminoacyl-tRNA synthetase family. Requires Zn(2+) as cofactor.

It localises to the cytoplasm. The catalysed reaction is tRNA(Ala) + L-alanine + ATP = L-alanyl-tRNA(Ala) + AMP + diphosphate. In terms of biological role, catalyzes the attachment of alanine to tRNA(Ala) in a two-step reaction: alanine is first activated by ATP to form Ala-AMP and then transferred to the acceptor end of tRNA(Ala). Also edits incorrectly charged Ser-tRNA(Ala) and Gly-tRNA(Ala) via its editing domain. In Fervidobacterium nodosum (strain ATCC 35602 / DSM 5306 / Rt17-B1), this protein is Alanine--tRNA ligase.